A 114-amino-acid chain; its full sequence is Large ribosomal subunit protein uL22 (114 aa).

Belongs to the universal ribosomal protein uL22 family. In terms of assembly, part of the 50S ribosomal subunit.

This protein binds specifically to 23S rRNA; its binding is stimulated by other ribosomal proteins, e.g. L4, L17, and L20. It is important during the early stages of 50S assembly. It makes multiple contacts with different domains of the 23S rRNA in the assembled 50S subunit and ribosome. Its function is as follows. The globular domain of the protein is located near the polypeptide exit tunnel on the outside of the subunit, while an extended beta-hairpin is found that lines the wall of the exit tunnel in the center of the 70S ribosome. In Streptococcus pneumoniae (strain Taiwan19F-14), this protein is Large ribosomal subunit protein uL22.